Reading from the N-terminus, the 282-residue chain is UDP-3-O-acyl-N-acetylglucosamine deacetylase (282 aa).

3 residues coordinate Zn(2+): His81, His239, and Asp243. His266 (proton donor) is an active-site residue.

The protein belongs to the LpxC family. Zn(2+) serves as cofactor.

It catalyses the reaction a UDP-3-O-[(3R)-3-hydroxyacyl]-N-acetyl-alpha-D-glucosamine + H2O = a UDP-3-O-[(3R)-3-hydroxyacyl]-alpha-D-glucosamine + acetate. It participates in glycolipid biosynthesis; lipid IV(A) biosynthesis; lipid IV(A) from (3R)-3-hydroxytetradecanoyl-[acyl-carrier-protein] and UDP-N-acetyl-alpha-D-glucosamine: step 2/6. In terms of biological role, catalyzes the hydrolysis of UDP-3-O-myristoyl-N-acetylglucosamine to form UDP-3-O-myristoylglucosamine and acetate, the committed step in lipid A biosynthesis. The chain is UDP-3-O-acyl-N-acetylglucosamine deacetylase from Chlamydia pneumoniae (Chlamydophila pneumoniae).